The chain runs to 873 residues: Zinc finger X-linked protein ZXDB (873 aa).

Disordered stretches follow at residues 1–23 (MEIP…GCPA), 48–120 (RGAQ…GGSR), 138–184 (VETV…LSAV), 240–259 (EPGV…GALI), and 301–330 (AEPA…GPAG). Gly residues-rich tracts occupy residues 14-23 (QGAGGGGCPA) and 85-120 (SGGG…GGSR). An Omega-N-methylarginine modification is found at Arg89. Basic and acidic residues predominate over residues 150-165 (VRREEAGAGPRPERRQ). Pro residues predominate over residues 240-255 (EPGVAPFPQPQPPPQP). A compositionally biased stretch (low complexity) spans 316–327 (APAAAAAQSPRG). C2H2-type zinc fingers lie at residues 340–364 (YLCP…LLTH), 373–397 (FKCP…LQSH), 403–427 (FGCP…MKGH), 433–455 (FKCE…QRSH), 462–486 (YQCA…NRAH), 493–517 (FACS…LRSH), 523–547 (FLCD…KRKH), 553–577 (FTCP…SITH), 583–607 (FVCP…SKKH), and 616–641 (SRCP…TKRH). A required for interaction with ZXDC region spans residues 340–646 (YLCPEAQCGQ…MTKRHNLSQD (307 aa)). The required for transcriptional activation stretch occupies residues 645 to 776 (QDLLAQLEAA…DMDDVSAGNV (132 aa)).

This sequence belongs to the ZXD family. Self-associates. Interacts with ZXDC and CIITA.

The protein localises to the nucleus. Cooperates with CIITA to promote transcription of MHC class I and MHC class II genes. The protein is Zinc finger X-linked protein ZXDB (Zxdb) of Mus musculus (Mouse).